Consider the following 625-residue polypeptide: Procollagen galactosyltransferase 2 (625 aa).

Residues 1–26 form the signal peptide; the sequence is MAARLATVACALFLLSSALLRLGCRA. Residues Asn96, Asn184, Asn381, and Asn579 are each glycosylated (N-linked (GlcNAc...) asparagine). A disordered region spans residues 597–625; that stretch reads QGHIRSTAKNTEALPPPTSLDTVPSRDEL. Residues 622 to 625 carry the Prevents secretion from ER motif; sequence RDEL.

The protein belongs to the glycosyltransferase 25 family.

The protein resides in the endoplasmic reticulum lumen. The enzyme catalyses (5R)-5-hydroxy-L-lysyl-[collagen] + UDP-alpha-D-galactose = (5R)-5-O-(beta-D-galactosyl)-5-hydroxy-L-lysyl-[collagen] + UDP + H(+). Its function is as follows. Beta-galactosyltransferase that transfers beta-galactose to hydroxylysine residues of collagen. The polypeptide is Procollagen galactosyltransferase 2 (Colgalt2) (Mus musculus (Mouse)).